The following is a 220-amino-acid chain: Small ribosomal subunit protein uS3c (220 aa).

Residues 39–120 (IRDFIKNYVK…KLIIDIIRIT (82 aa)) form the KH type-2 domain.

Belongs to the universal ribosomal protein uS3 family. As to quaternary structure, part of the 30S ribosomal subunit.

Its subcellular location is the plastid. This Epifagus virginiana (Beechdrops) protein is Small ribosomal subunit protein uS3c (rps3).